The sequence spans 228 residues: Urease accessory protein UreF (228 aa).

This sequence belongs to the UreF family. UreD, UreF and UreG form a complex that acts as a GTP-hydrolysis-dependent molecular chaperone, activating the urease apoprotein by helping to assemble the nickel containing metallocenter of UreC. The UreE protein probably delivers the nickel.

It is found in the cytoplasm. Its function is as follows. Required for maturation of urease via the functional incorporation of the urease nickel metallocenter. The sequence is that of Urease accessory protein UreF from Yersinia pseudotuberculosis serotype IB (strain PB1/+).